The primary structure comprises 231 residues: MSTSETATVIPVYDVAPGQQGAPAVDRAPAPSAPPAAAAAPAAAAAKSTAPRRFAAGRFFRQSDRGSRCLAFLDFLLRIAAFGPALAAAIATGTSDETLSVFTEFFQFRARFDDFPAFLFLMVANAIAAGYLVLSLPFSAVVVLRPQATGLRLLLLVCDTIMIGLLTAAAAAAAAIVELAHNGNERANWVAICMQFHGFCQRTSGAVVASFLSVFLFLLLVVLAAFAIRKR.

Residues 1–69 (MSTSETATVI…FRQSDRGSRC (69 aa)) are Cytoplasmic-facing. The chain crosses the membrane as a helical span at residues 70 to 90 (LAFLDFLLRIAAFGPALAAAI). The Extracellular portion of the chain corresponds to 91-117 (ATGTSDETLSVFTEFFQFRARFDDFPA). A helical transmembrane segment spans residues 118–138 (FLFLMVANAIAAGYLVLSLPF). The Cytoplasmic segment spans residues 139–152 (SAVVVLRPQATGLR). The chain crosses the membrane as a helical span at residues 153–173 (LLLLVCDTIMIGLLTAAAAAA). The Extracellular segment spans residues 174–207 (AAIVELAHNGNERANWVAICMQFHGFCQRTSGAV). Residues 208 to 228 (VASFLSVFLFLLLVVLAAFAI) traverse the membrane as a helical segment. Over 229–231 (RKR) the chain is Cytoplasmic.

Belongs to the Casparian strip membrane proteins (CASP) family. In terms of assembly, homodimer and heterodimers.

It is found in the cell membrane. Regulates membrane-cell wall junctions and localized cell wall deposition. Required for establishment of the Casparian strip membrane domain (CSD) and the subsequent formation of Casparian strips, a cell wall modification of the root endodermis that determines an apoplastic barrier between the intraorganismal apoplasm and the extraorganismal apoplasm and prevents lateral diffusion. The polypeptide is Casparian strip membrane protein 1 (Brachypodium distachyon (Purple false brome)).